The primary structure comprises 872 residues: Lysosomal cholesterol signaling protein (872 aa).

Over 1 to 40 (MNSFSNLPAENLTIAVNMTKTLPTAVMHGFNSTNDPPSMS) the chain is Lumenal. Positions 3 to 372 (SFSNLPAENL…SAWLLTFPTM (370 aa)) are PIN-like transporter. 3 N-linked (GlcNAc...) asparagine glycosylation sites follow: asparagine 11, asparagine 17, and asparagine 31. Residues 41–61 (ITRLFPALLECFGIVLCGYIA) form a helical membrane-spanning segment. Phenylalanine 45 and tyrosine 59 together coordinate cholesterol. Residues 62-81 (GRANVITSTQAKGLGNFVSR) lie on the Cytoplasmic side of the membrane. A helical membrane pass occupies residues 82–102 (FALPALLFKNMVVLNFSNVDW). Topologically, residues 103–106 (SFLY) are lumenal. Residues 107-127 (SILIAKASVFFIVCVLTLLVA) traverse the membrane as a helical segment. Residues 128–135 (SPDSRFSK) lie on the Cytoplasmic side of the membrane. A discontinuously helical membrane pass occupies residues 136–156 (AGLFPIFATQSNDFALGYPIV). Topologically, residues 157 to 169 (EALYQTTYPEYLQ) are lumenal. A helical transmembrane segment spans residues 170–190 (YIYLVAPISLMMLNPIGFIFC). The Cytoplasmic portion of the chain corresponds to 191-215 (EIQKWKDTQNASQNKIKIVGLGLLR). A discontinuously helical transmembrane segment spans residues 216 to 236 (VLQNPIVFMVFIGIAFNFILD). The Lumenal portion of the chain corresponds to 237–245 (RKVPVYVEN). The discontinuously helical transmembrane segment at 246–266 (FLDGLGNSFSGSALFYLGLTM) threads the bilayer. Over 267–275 (VGKIKRLKK) the chain is Cytoplasmic. 3 residues coordinate cholesterol: glycine 268, lysine 269, and isoleucine 270. A helical transmembrane segment spans residues 276–296 (SAFVVLILLITAKLLVLPLLC). Topologically, residues 297 to 317 (REMVELLDKGDSVVNHTSLSN) are lumenal. Asparagine 311 carries N-linked (GlcNAc...) asparagine glycosylation. A discontinuously helical membrane pass occupies residues 318-338 (YAFLYGVFPVAPGVAIFATQF). The Cytoplasmic portion of the chain corresponds to 339-348 (NMEVEIITSG). A helical transmembrane segment spans residues 349-369 (MVISTFVSAPIMYVSAWLLTF). Over 370–383 (PTMDPKPLAYAIQN) the chain is Lumenal. The tract at residues 382–719 (QNVSFDISIV…FGIFGLDKHL (338 aa)) is GPCR. N-linked (GlcNAc...) asparagine glycosylation occurs at asparagine 383. The helical transmembrane segment at 384–404 (VSFDISIVSLISLIWSQAILL) threads the bilayer. The Cytoplasmic segment spans residues 405-416 (LSKKYKQLPHML). The chain crosses the membrane as a helical span at residues 417–437 (TTNLLIAQSIVCAGMMIWNFV). The Lumenal segment spans residues 438–440 (KEK). A helical membrane pass occupies residues 441 to 461 (NFVGQILVFVLLYSSLYSTYL). Residues 462 to 482 (WTGLLAISLFLLKKRERVQIP) are Cytoplasmic-facing. Residues 483–503 (VGIIIISGWGIPALLVGVLLI) traverse the membrane as a helical segment. Residues 504 to 522 (TGKHSGDSIDSAFFYGKEQ) are Lumenal-facing. A helical transmembrane segment spans residues 523-543 (MITTAVTLFCSILIAGISLMC). The Cytoplasmic portion of the chain corresponds to 544 to 662 (MNRTAQAGSY…GDQQLTRHVL (119 aa)). A cholesterol-binding site is contributed by arginine 659. A helical membrane pass occupies residues 663–683 (LCLLLIIGLFANLSSCLWWLF). At 684 to 693 (NQEPGRLYVE) the chain is on the lumenal side. Residues 694 to 714 (LQFFCAVFNFGQGFISFGIFG) form a helical membrane-spanning segment. The Cytoplasmic segment spans residues 715-872 (LDKHLIILPF…SSPPSHSPKT (158 aa)). Residues 759–837 (YHRDLCIRNI…DEYLFYRFLQ (79 aa)) enclose the DEP domain.

As to quaternary structure, homodimer; via the transporter region and DEP domain. Interacts with the GATOR1 complex; preventing interaction between GATOR1 and KICSTOR; interaction is disrupted upon cholesterol starvation.

The protein resides in the lysosome membrane. Cholesterol-binding protein that acts as a regulator of mTORC1 signaling pathway. Acts as a sensor of cholesterol to signal cholesterol sufficiency to mTORC1: in presence of cholesterol, binds cholesterol, leading to disruption of the interaction between the GATOR1 and KICSTOR complexes and promotion of mTORC1 signaling. Upon cholesterol starvation, GPR155/LYCHOS is unable to perturb the association between GATOR1 and KICSTOR, leading to mTORC1 signaling inhibition. Binds indole-3-acetic acid and may play a role in tryptophan metabolism. This chain is Lysosomal cholesterol signaling protein (GPR155), found in Pongo abelii (Sumatran orangutan).